The following is a 124-amino-acid chain: Large ribosomal subunit protein bL12 (124 aa).

This sequence belongs to the bacterial ribosomal protein bL12 family. In terms of assembly, homodimer. Part of the ribosomal stalk of the 50S ribosomal subunit. Forms a multimeric L10(L12)X complex, where L10 forms an elongated spine to which 2 to 4 L12 dimers bind in a sequential fashion. Binds GTP-bound translation factors.

Functionally, forms part of the ribosomal stalk which helps the ribosome interact with GTP-bound translation factors. Is thus essential for accurate translation. This is Large ribosomal subunit protein bL12 from Ralstonia nicotianae (strain ATCC BAA-1114 / GMI1000) (Ralstonia solanacearum).